The following is a 346-amino-acid chain: Annexin A1 (346 aa).

N-acetylalanine is present on A2. Position 5 is a phosphoserine; by TRPM7 (S5). Q19 is covalently cross-linked (Isoglutamyl lysine isopeptide (Gln-Lys) (interchain with K-?)). Position 21 is a phosphotyrosine; by EGFR (Y21). S27 is subject to Phosphoserine; by PKC. A phosphoserine mark is found at S34 and S37. T41 is modified (phosphothreonine). Annexin repeat units follow at residues 42-113, 114-185, 197-269, and 273-344; these read FNPS…ALLK, TPAQ…SLAK, DLAD…AIVK, and SKPA…ALCG. K58 carries the N6-acetyllysine modification. 11 residues coordinate Ca(2+): G59, V60, E62, K97, L100, E105, M127, G129, G131, T132, and E134. The residue at position 136 (T136) is a Phosphothreonine. Ca(2+)-binding residues include D171, G210, and R213. K214 is covalently cross-linked (Glycyl lysine isopeptide (Lys-Gly) (interchain with G-Cter in SUMO1); alternate). K214 is covalently cross-linked (Glycyl lysine isopeptide (Lys-Gly) (interchain with G-Cter in SUMO2); alternate). G215 is a binding site for Ca(2+). N6-acetyllysine is present on K239. Positions 253, 255, and 256 each coordinate Ca(2+). A Glycyl lysine isopeptide (Lys-Gly) (interchain with G-Cter in SUMO1) cross-link involves residue K257. Ca(2+) is bound by residues E261, M286, G288, and G290. Position 312 is an N6-acetyllysine (K312). A disulfide bond links C324 and C343. The Ca(2+) site is built by L328, E330, and T331. Residue K332 forms a Glycyl lysine isopeptide (Lys-Gly) (interchain with G-Cter in SUMO1) linkage. Ca(2+) is bound at residue E336.

It belongs to the annexin family. Homodimer; non-covalently linked. Homodimer; linked by transglutamylation. Homodimers linked by transglutamylation are observed in placenta, but not in other tissues. Interacts with S100A11. Heterotetramer, formed by two molecules each of S100A11 and ANXA1. Interacts with DYSF. Interacts with EGFR. Post-translationally, phosphorylated by protein kinase C, EGFR and TRPM7. Phosphorylated in response to EGF treatment. Sumoylated. In terms of processing, proteolytically cleaved by cathepsin CTSG to release the active N-terminal peptide Ac2-26. Detected in resting neutrophils. Detected in peripheral blood T-cells. Detected in extracellular vesicles in blood serum from patients with inflammatory bowel disease, but not in serum from healthy donors. Detected in placenta (at protein level). Detected in liver.

The protein localises to the nucleus. The protein resides in the cytoplasm. It localises to the cell projection. It is found in the cilium. Its subcellular location is the cell membrane. The protein localises to the membrane. The protein resides in the endosome membrane. It localises to the basolateral cell membrane. It is found in the apical cell membrane. Its subcellular location is the lateral cell membrane. The protein localises to the secreted. The protein resides in the extracellular space. It localises to the extracellular exosome. It is found in the cytoplasmic vesicle. Its subcellular location is the secretory vesicle lumen. The protein localises to the phagocytic cup. The protein resides in the early endosome. It localises to the cytoplasmic vesicle membrane. Functionally, plays important roles in the innate immune response as effector of glucocorticoid-mediated responses and regulator of the inflammatory process. Has anti-inflammatory activity. Plays a role in glucocorticoid-mediated down-regulation of the early phase of the inflammatory response. Contributes to the adaptive immune response by enhancing signaling cascades that are triggered by T-cell activation, regulates differentiation and proliferation of activated T-cells. Promotes the differentiation of T-cells into Th1 cells and negatively regulates differentiation into Th2 cells. Has no effect on unstimulated T cells. Negatively regulates hormone exocytosis via activation of the formyl peptide receptors and reorganization of the actin cytoskeleton. Has high affinity for Ca(2+) and can bind up to eight Ca(2+) ions. Displays Ca(2+)-dependent binding to phospholipid membranes. Plays a role in the formation of phagocytic cups and phagosomes. Plays a role in phagocytosis by mediating the Ca(2+)-dependent interaction between phagosomes and the actin cytoskeleton. Functions at least in part by activating the formyl peptide receptors and downstream signaling cascades. Promotes chemotaxis of granulocytes and monocytes via activation of the formyl peptide receptors. Promotes rearrangement of the actin cytoskeleton, cell polarization and cell migration. Promotes resolution of inflammation and wound healing. Acts via neutrophil N-formyl peptide receptors to enhance the release of CXCL2. In Homo sapiens (Human), this protein is Annexin A1 (ANXA1).